Reading from the N-terminus, the 1100-residue chain is MAIAHFSASIVSRGSGRSVVLSAAYRHCAKMEYEREARTIDYTRKQGLLHEEFVLPADAPKWVRSLIADRSVSGASEAFWNKVEAFEKRADAQLARDLTIALPLELSAEQNIALVRDFVENHILAKGMVADWVYHENPGNPHIHLMTTLRPLSDESFGSKKVAVIGEDGQPVRTKSGKILYELWAGSTDDFNVLRDGWFERLNHHLALGGIDLKIDGRSYEKQGINLEPTIHLGVGAKAIERKAEQRGVRPELERVELNEQRRSENTRRILNNPAIVLDLITREKSVFDERDVAKVLHRYIDDPALFQQLMIKIILNRQVLRLQRETIDFSTGEKLPARYSTRAMIRLEATMARQATWLSNREGRGVSPTALDATFRRHERLSDEQKAAIEHVAGPARIAAVVGRAGAGKTTMMKAAREAWELAGYHVVGGALAGKAAEGLEKEAGIQSRTLASWELRWKRGRDLLDDKTIFIMDEAGMVASKQMAGFVDTAVRAGAKIVLVGDPEQLQPIEAGAAFRAIADRIGYAELETIYRQREEWMRKASLDLARGNVENALSAYRANVRITGERLKAEAVERLIADWNHDYDQTKTILILAHLRRDVRMLNVMAREKLVERGMVGEGHLFRTADGERRFDAGDQIVFLKNEGSLGLKNGMIGHVVVAAANRIVATVGEGDQRRQVIVEQRFYNNLDHGYATTIHKSQGATVDRVKVLASLSLDRHLTYVAMTRHREDLQLYYGTRSFSFNGGLAKVLSRRQAKETTLDYEHGQFYREALRFAETRGLHVVQVARTMVRDRLDWTLRQKAKLVDLSRRLAAFAAHLGITQSPKTQTMKETAPMVAGIKTFSGSVSDIVGDRLGTDPSLKRQWEEVSARFAYVFADPETAFRAMNFAALLADKEVAKQILQKLEAEPGSIGPLKGKTGILASKPEREARRVAEVNVPALKRDLEQYLRMRETVTQRLQTDEQSLRQRVSIDIPALSPAARVVRERVRDAIDRNDLPAAIAYALSNRETKLEIDGFNQAVTERFGERTLLSNAAREPSGKLYEKLSEGMKPEQKEELKQAWPVMRTAQQLVAHERTVHSLKLAEEHRLTQRQTPVLKQ.

Glycine 404 to threonine 411 provides a ligand contact to ATP.

This sequence belongs to the MobA/MobL family.

This is Conjugal transfer protein TraA (traA) from Rhizobium radiobacter (Agrobacterium tumefaciens).